Reading from the N-terminus, the 84-residue chain is Large ribosomal subunit protein bL27 (84 aa).

The interval Met1–Leu21 is disordered.

The protein belongs to the bacterial ribosomal protein bL27 family.

In Pelodictyon phaeoclathratiforme (strain DSM 5477 / BU-1), this protein is Large ribosomal subunit protein bL27.